Reading from the N-terminus, the 256-residue chain is 4-hydroxy-tetrahydrodipicolinate reductase (256 aa).

NAD(+) is bound at residue 8-13 (GATGRV). K36 is an NADP(+) binding site. NAD(+)-binding positions include 89 to 91 (GTT) and 113 to 116 (ATNM). Catalysis depends on H145, which acts as the Proton donor/acceptor. H146 contributes to the (S)-2,3,4,5-tetrahydrodipicolinate binding site. Residue K149 is the Proton donor of the active site. 155-156 (GT) serves as a coordination point for (S)-2,3,4,5-tetrahydrodipicolinate.

It belongs to the DapB family.

Its subcellular location is the cytoplasm. The catalysed reaction is (S)-2,3,4,5-tetrahydrodipicolinate + NAD(+) + H2O = (2S,4S)-4-hydroxy-2,3,4,5-tetrahydrodipicolinate + NADH + H(+). It catalyses the reaction (S)-2,3,4,5-tetrahydrodipicolinate + NADP(+) + H2O = (2S,4S)-4-hydroxy-2,3,4,5-tetrahydrodipicolinate + NADPH + H(+). It functions in the pathway amino-acid biosynthesis; L-lysine biosynthesis via DAP pathway; (S)-tetrahydrodipicolinate from L-aspartate: step 4/4. Functionally, catalyzes the conversion of 4-hydroxy-tetrahydrodipicolinate (HTPA) to tetrahydrodipicolinate. In Wolinella succinogenes (strain ATCC 29543 / DSM 1740 / CCUG 13145 / JCM 31913 / LMG 7466 / NCTC 11488 / FDC 602W) (Vibrio succinogenes), this protein is 4-hydroxy-tetrahydrodipicolinate reductase.